A 408-amino-acid polypeptide reads, in one-letter code: MSRYVFTSESVTEGHPDKICDQVSDAVLDALLAQDPASRVACETVVNTGLCMITGEVTSKAKVDFIHLVRDVIKEIGYSGARAGGFDANSCAVLVALDQQSPDIAQGVNEADDHAGDPLDLVGAGDQGIMFGYACNETPELMPLPISLAHRLARQLAEVRHNGTLDYLLPDGKTQVSVVYENDQPVAIDTILISTQHTAEVGGMSDEQGIRERITEDLWTHVVEPATADLNLKPSREGTKYLVNPTGKFVVGGPQGDAGLTGRKIIVDTYGGYARHGGGAFSGKDPTKVDRSAAYAARFVAKALVASGLAGRAEVQLSYAIGVAKPVSILVESFGTGTVSNEDLTALVQEHFDLRPGAIIENFGLRNLPQARGGRFYQNTAAYGHFGRNDLNLPWEDVAAKAEELRKA.

Residue histidine 15 coordinates ATP. Aspartate 17 lines the Mg(2+) pocket. Glutamate 43 provides a ligand contact to K(+). Residues glutamate 56 and glutamine 100 each contribute to the L-methionine site. A flexible loop region spans residues 100 to 110 (QSPDIAQGVNE). Residues 171–173 (DGK), 248–249 (KF), aspartate 257, 263–264 (RK), alanine 280, and lysine 284 each bind ATP. Aspartate 257 serves as a coordination point for L-methionine. Lysine 288 contributes to the L-methionine binding site.

Belongs to the AdoMet synthase family. As to quaternary structure, homotetramer; dimer of dimers. The cofactor is Mg(2+). It depends on K(+) as a cofactor.

It is found in the cytoplasm. It catalyses the reaction L-methionine + ATP + H2O = S-adenosyl-L-methionine + phosphate + diphosphate. It functions in the pathway amino-acid biosynthesis; S-adenosyl-L-methionine biosynthesis; S-adenosyl-L-methionine from L-methionine: step 1/1. In terms of biological role, catalyzes the formation of S-adenosylmethionine (AdoMet) from methionine and ATP. The overall synthetic reaction is composed of two sequential steps, AdoMet formation and the subsequent tripolyphosphate hydrolysis which occurs prior to release of AdoMet from the enzyme. This Synechococcus sp. (strain CC9902) protein is S-adenosylmethionine synthase.